The following is an 86-amino-acid chain: Conotoxin S6.10 (86 aa).

The signal sequence occupies residues 1–22 (MKLTCVLIIAVLFLTACQLATA). A propeptide spanning residues 23–45 (KTYSKGRQKHRALRSTDKNIKLT) is cleaved from the precursor. Disulfide bonds link cysteine 48-cysteine 62, cysteine 55-cysteine 66, and cysteine 61-cysteine 73.

This sequence belongs to the conotoxin O1 superfamily. In terms of tissue distribution, expressed by the venom duct.

The protein localises to the secreted. The chain is Conotoxin S6.10 from Conus striatus (Striated cone).